A 291-amino-acid chain; its full sequence is Transmembrane protein 41B (291 aa).

Positions 1–11 (MAKGRVADRSP) are enriched in basic and acidic residues. A disordered region spans residues 1–43 (MAKGRVADRSPTEMLHSTPAGDRAVRTQGSAAPGSKDHLNEKP). At Thr18 the chain carries Phosphothreonine. Ser35 is subject to Phosphoserine. 6 helical membrane-spanning segments follow: residues 52 to 72 (TSLL…FLVY), 109 to 129 (FYVQ…TFAI), 147 to 169 (LALF…LSYL), 197 to 217 (LINY…FINI), 225 to 245 (PLKV…FVAI), and 262 to 282 (SWSS…PAIF). Positions 140 to 251 (GFLYPFPLAL…FVAIKAGTTL (112 aa)) are VTT domain; required for its function in autophagy.

Belongs to the TMEM41 family. Interacts with VMP1. Interacts with COPA, COPB1, VDAC1 and ERLIN2. Interacts with ATG2A. Interacts with SURF4. Expressed in brain, spinal cord, kidney and first lumbar dorsal root ganglia during postnatal development. Expressed in motor neurons and proprioceptive neurons.

The protein resides in the endoplasmic reticulum membrane. Its subcellular location is the endomembrane system. It catalyses the reaction a 1,2-diacyl-sn-glycero-3-phospho-L-serine(in) = a 1,2-diacyl-sn-glycero-3-phospho-L-serine(out). It carries out the reaction cholesterol(in) = cholesterol(out). The catalysed reaction is a 1,2-diacyl-sn-glycero-3-phosphocholine(in) = a 1,2-diacyl-sn-glycero-3-phosphocholine(out). The enzyme catalyses a 1,2-diacyl-sn-glycero-3-phosphoethanolamine(in) = a 1,2-diacyl-sn-glycero-3-phosphoethanolamine(out). Functionally, phospholipid scramblase involved in lipid homeostasis and membrane dynamics processes. Has phospholipid scramblase activity toward cholesterol and phosphatidylserine, as well as phosphatidylethanolamine and phosphatidylcholine. Required for autophagosome formation: participates in early stages of autophagosome biogenesis at the endoplasmic reticulum (ER) membrane by reequilibrating the leaflets of the ER as lipids are extracted by ATG2 (ATG2A or ATG2B) to mediate autophagosome assembly. In addition to autophagy, involved in other processes in which phospholipid scramblase activity is required. Required for normal motor neuron development. This is Transmembrane protein 41B from Mus musculus (Mouse).